We begin with the raw amino-acid sequence, 268 residues long: Hydroxyethylthiazole kinase (268 aa).

M45 serves as a coordination point for substrate. ATP is bound by residues R121 and T167. G194 serves as a coordination point for substrate.

Belongs to the Thz kinase family. It depends on Mg(2+) as a cofactor.

It catalyses the reaction 5-(2-hydroxyethyl)-4-methylthiazole + ATP = 4-methyl-5-(2-phosphooxyethyl)-thiazole + ADP + H(+). It functions in the pathway cofactor biosynthesis; thiamine diphosphate biosynthesis; 4-methyl-5-(2-phosphoethyl)-thiazole from 5-(2-hydroxyethyl)-4-methylthiazole: step 1/1. Catalyzes the phosphorylation of the hydroxyl group of 4-methyl-5-beta-hydroxyethylthiazole (THZ). In Bacillus cereus (strain Q1), this protein is Hydroxyethylthiazole kinase.